The following is a 95-amino-acid chain: Co-chaperonin GroES (95 aa).

This sequence belongs to the GroES chaperonin family. Heptamer of 7 subunits arranged in a ring. Interacts with the chaperonin GroEL.

The protein resides in the cytoplasm. Functionally, together with the chaperonin GroEL, plays an essential role in assisting protein folding. The GroEL-GroES system forms a nano-cage that allows encapsulation of the non-native substrate proteins and provides a physical environment optimized to promote and accelerate protein folding. GroES binds to the apical surface of the GroEL ring, thereby capping the opening of the GroEL channel. The chain is Co-chaperonin GroES from Xylella fastidiosa (strain M12).